A 311-amino-acid chain; its full sequence is 4-diphosphocytidyl-2-C-methyl-D-erythritol kinase (311 aa).

Residue Lys-16 is part of the active site. ATP is bound at residue 100 to 110 (PIGAGLAGGSS). Asp-142 is a catalytic residue.

Belongs to the GHMP kinase family. IspE subfamily.

The enzyme catalyses 4-CDP-2-C-methyl-D-erythritol + ATP = 4-CDP-2-C-methyl-D-erythritol 2-phosphate + ADP + H(+). Its pathway is isoprenoid biosynthesis; isopentenyl diphosphate biosynthesis via DXP pathway; isopentenyl diphosphate from 1-deoxy-D-xylulose 5-phosphate: step 3/6. Functionally, catalyzes the phosphorylation of the position 2 hydroxy group of 4-diphosphocytidyl-2C-methyl-D-erythritol. The chain is 4-diphosphocytidyl-2-C-methyl-D-erythritol kinase from Prochlorococcus marinus (strain MIT 9301).